The sequence spans 331 residues: Ketol-acid reductoisomerase (NADP(+)) (331 aa).

Residues 2–182 form the KARI N-terminal Rossmann domain; the sequence is ARMYYDADAN…GGTRGGILET (181 aa). Residues 25–28, Ser-51, Ser-53, and 83–86 each bind NADP(+); these read YGSQ and DDVQ. His-108 is a catalytic residue. Gly-134 lines the NADP(+) pocket. A KARI C-terminal knotted domain is found at 183-328; the sequence is TFREETETDL…KDLRAMFSWL (146 aa). 4 residues coordinate Mg(2+): Asp-191, Glu-195, Glu-227, and Glu-231. Ser-252 contributes to the substrate binding site.

Belongs to the ketol-acid reductoisomerase family. It depends on Mg(2+) as a cofactor.

It carries out the reaction (2R)-2,3-dihydroxy-3-methylbutanoate + NADP(+) = (2S)-2-acetolactate + NADPH + H(+). It catalyses the reaction (2R,3R)-2,3-dihydroxy-3-methylpentanoate + NADP(+) = (S)-2-ethyl-2-hydroxy-3-oxobutanoate + NADPH + H(+). It functions in the pathway amino-acid biosynthesis; L-isoleucine biosynthesis; L-isoleucine from 2-oxobutanoate: step 2/4. The protein operates within amino-acid biosynthesis; L-valine biosynthesis; L-valine from pyruvate: step 2/4. Involved in the biosynthesis of branched-chain amino acids (BCAA). Catalyzes an alkyl-migration followed by a ketol-acid reduction of (S)-2-acetolactate (S2AL) to yield (R)-2,3-dihydroxy-isovalerate. In the isomerase reaction, S2AL is rearranged via a Mg-dependent methyl migration to produce 3-hydroxy-3-methyl-2-ketobutyrate (HMKB). In the reductase reaction, this 2-ketoacid undergoes a metal-dependent reduction by NADPH to yield (R)-2,3-dihydroxy-isovalerate. The polypeptide is Ketol-acid reductoisomerase (NADP(+)) (Picosynechococcus sp. (strain ATCC 27264 / PCC 7002 / PR-6) (Agmenellum quadruplicatum)).